The chain runs to 390 residues: Magnesium-protoporphyrin IX monomethyl ester [oxidative] cyclase (390 aa).

The segment at methionine 1–proline 20 is disordered.

Belongs to the AcsF family. Requires Fe cation as cofactor.

It carries out the reaction Mg-protoporphyrin IX 13-monomethyl ester + 3 NADPH + 3 O2 + 2 H(+) = 3,8-divinyl protochlorophyllide a + 3 NADP(+) + 5 H2O. It participates in porphyrin-containing compound metabolism; chlorophyll biosynthesis (light-independent). Its function is as follows. Catalyzes the formation of the isocyclic ring in chlorophyll biosynthesis. Mediates the cyclase reaction, which results in the formation of divinylprotochlorophyllide (Pchlide) characteristic of all chlorophylls from magnesium-protoporphyrin IX 13-monomethyl ester (MgPMME). The polypeptide is Magnesium-protoporphyrin IX monomethyl ester [oxidative] cyclase (Prochlorococcus marinus (strain MIT 9301)).